The primary structure comprises 429 residues: Enolase (429 aa).

Residue glutamine 162 coordinates (2R)-2-phosphoglycerate. Glutamate 204 functions as the Proton donor in the catalytic mechanism. Mg(2+) contacts are provided by aspartate 241, glutamate 288, and aspartate 315. The (2R)-2-phosphoglycerate site is built by lysine 340, arginine 369, serine 370, and lysine 391. Lysine 340 acts as the Proton acceptor in catalysis.

It belongs to the enolase family. The cofactor is Mg(2+).

The protein localises to the cytoplasm. The protein resides in the secreted. Its subcellular location is the cell surface. The enzyme catalyses (2R)-2-phosphoglycerate = phosphoenolpyruvate + H2O. Its pathway is carbohydrate degradation; glycolysis; pyruvate from D-glyceraldehyde 3-phosphate: step 4/5. Its function is as follows. Catalyzes the reversible conversion of 2-phosphoglycerate (2-PG) into phosphoenolpyruvate (PEP). It is essential for the degradation of carbohydrates via glycolysis. The sequence is that of Enolase from Bacteroides fragilis (strain ATCC 25285 / DSM 2151 / CCUG 4856 / JCM 11019 / LMG 10263 / NCTC 9343 / Onslow / VPI 2553 / EN-2).